A 191-amino-acid chain; its full sequence is Ribonuclease HII (191 aa).

The 185-residue stretch at 7 to 191 (ILMAGVDEVG…YSPVADLISK (185 aa)) folds into the RNase H type-2 domain. A divalent metal cation-binding residues include aspartate 13, glutamate 14, and aspartate 103.

Belongs to the RNase HII family. Mn(2+) serves as cofactor. Requires Mg(2+) as cofactor.

The protein localises to the cytoplasm. It catalyses the reaction Endonucleolytic cleavage to 5'-phosphomonoester.. Its function is as follows. Endonuclease that specifically degrades the RNA of RNA-DNA hybrids. The sequence is that of Ribonuclease HII from Legionella pneumophila subsp. pneumophila (strain Philadelphia 1 / ATCC 33152 / DSM 7513).